Consider the following 78-residue polypeptide: VEQPDSSSSDGIFYYDEASQTKKISDDHVSEYQTIPLNKKQYYSLDITYFKSSLDSHLLDLLWNKKDILFNSARQSDK.

This sequence belongs to the peptidase M67A family. CSN5 subfamily. Component of the CSN complex, probably composed of CSN1, CSN2, CSN3, CSN4, CSN5 (CSN5A or CSN5B), CSN6 (CSN6A or CSN6B), CSN7 and CSN8. A divalent metal cation serves as cofactor.

It is found in the cytoplasm. The protein resides in the nucleus. Its function is as follows. Probable protease subunit of the COP9 signalosome complex (CSN), a complex involved in various cellular and developmental processes such as photomorphogenesis and auxin and jasmonate responses. The CSN complex is an essential regulator of the ubiquitin (Ubl) conjugation pathway by mediating the deneddylation of the cullin subunits of the SCF-type E3 ligase complexes, leading to decrease the Ubl ligase activity of SCF. In the complex, it probably acts as the catalytic center that mediates the cleavage of Nedd8 from cullins. It however has no metalloprotease activity by itself and requires the other subunits of the CSN complex. The CSN complex is involved in repression of photomorphogenesis in darkness by regulating the activity of COP1-containing Ubl ligase complexes. In Brassica oleracea (Wild cabbage), this protein is COP9 signalosome complex subunit 5b (CSN5B).